The chain runs to 493 residues: MSLLKMEYNLYAELKKMTCGQPLSLFNEDGDFVEVEPGSSFKFLIPKGFYASPSVKTSLVFETLTTTDNKITSINPTNAPKLYPLQRKVVSEVVSNMRKMIESKRPLYITLHLACGFGKTITTCYLMATHGRKTVICVPNKMLIHQWKTQVEAVGLEHKISIDGVSSLLKELKTQSPDVLIVVSRHLTNDAFCKYINKHYDLFILDESHTYNLMNNTAVTRFLAYYPPMMCYFLTATPRPANRIYCNSIINIAKLSDLKKTIYAVDSFFEPYSTDNIRHMVKRLDGPSNKYHIYTEKLLSVDEPRNQLILNTLVEEFKSGTINRILVITKLREHMVLFYKRLLDLFGPEVVFIGDAQNRRTPDMVKSIKELNRFIFVSTLFYSGTGLDIPSLDSLFICSAVINNMQIEQLLGRVCRETELLDRTVYVFPNTSIKEIKYMIGNFMQRIISLSVDKLGFKQESYRKHQESDPTSVCTTSSREERVLNRIFNSQNR.

Residues 100–256 (MIESKRPLYI…NSIINIAKLS (157 aa)) form the Helicase ATP-binding domain. 113–120 (LACGFGKT) provides a ligand contact to ATP. A DESH box motif is present at residues 206 to 209 (DESH).

The protein belongs to the helicase family. Poxviruses subfamily. Interacts with G2. Might be part of a transcription complex composed at least of G2, A18, and H5.

Its subcellular location is the virion. Functionally, DNA helicase which seems to act as a postreplicative transcription termination factor. Involved in ATP-dependent release of nascent RNA. Forms a stable complex with single-stranded DNA, and to a lesser extent RNA. The polypeptide is Transcript termination protein A18 (Rabbitpox virus (strain Utrecht) (RPV)).